The chain runs to 332 residues: Ferredoxin--NADP reductase 2 (332 aa).

FAD is bound by residues glutamate 37, glutamine 45, tyrosine 50, valine 90, phenylalanine 124, aspartate 285, and threonine 326.

Belongs to the ferredoxin--NADP reductase type 2 family. As to quaternary structure, homodimer. FAD is required as a cofactor.

The catalysed reaction is 2 reduced [2Fe-2S]-[ferredoxin] + NADP(+) + H(+) = 2 oxidized [2Fe-2S]-[ferredoxin] + NADPH. This Bacillus subtilis (strain 168) protein is Ferredoxin--NADP reductase 2 (yumC).